The following is a 589-amino-acid chain: Pentalenolactone D synthase (589 aa).

FAD is bound by residues 60 to 61 (IG), 82 to 83 (DE), 90 to 91 (TW), 102 to 103 (DV), tyrosine 108, valine 152, and methionine 491.

It belongs to the FAD-binding monooxygenase family. It depends on FAD as a cofactor.

It catalyses the reaction 1-deoxy-11-oxopentalenate + NADPH + O2 + H(+) = pentalenolactone D + NADP(+) + H2O. Its pathway is antibiotic biosynthesis; pentalenolactone biosynthesis. Catalyzes the flavin-dependent Baeyer-Villiger oxidation of 1-deoxy-11-oxopentalenic acid to pentalenolactone D in the biosynthesis of pentalenolactone antibiotic. This chain is Pentalenolactone D synthase (pntE), found in Streptomyces arenae.